Reading from the N-terminus, the 793-residue chain is Probable phosphoketolase 2 (793 aa).

The protein belongs to the XFP family. It depends on thiamine diphosphate as a cofactor.

The chain is Probable phosphoketolase 2 from Nostoc sp. (strain PCC 7120 / SAG 25.82 / UTEX 2576).